A 383-amino-acid polypeptide reads, in one-letter code: Guanine nucleotide-binding protein G(s) subunit alpha (383 aa).

A disordered region spans residues Met1 to Thr31. Gly2 carries N-palmitoyl glycine lipidation. Residue Cys3 is the site of S-palmitoyl cysteine attachment. Polar residues predominate over residues Gly8–Ser17. Positions Glu18 to Thr31 are enriched in basic and acidic residues. In terms of domain architecture, G-alpha spans Ala43–Leu383. A G1 motif region spans residues Arg46–Thr59. GTP-binding positions include Gly51–Ser58, Leu187–Thr193, Asp212–Gln216, Asn281–Asp284, and Ala355. Residues Ser58 and Thr193 each contribute to the Mg(2+) site. The G2 motif stretch occupies residues Asp185–Thr193. The G3 motif stretch occupies residues Phe208 to Arg217. The tract at residues Ile277–Asp284 is G4 motif. The segment at Thr353–Thr358 is G5 motif.

Belongs to the G-alpha family. G(s) subfamily. G proteins are composed of 3 units; alpha, beta and gamma. The alpha chain contains the guanine nucleotide binding site.

Its function is as follows. Guanine nucleotide-binding proteins (G proteins) are involved as modulators or transducers in various transmembrane signaling systems. The G(s) protein is involved in hormonal regulation of adenylate cyclase: it activates the cyclase. Participates in olfactory signal transduction. In Anopheles gambiae (African malaria mosquito), this protein is Guanine nucleotide-binding protein G(s) subunit alpha.